The primary structure comprises 942 residues: Protein inturned (942 aa).

Residues 1 to 52 (MASVASCDSRPSSDELPGDPSSQEEDEDYDFEDRVSDSGSYSSASSDYDDLE) form a disordered region. The span at 22-31 (SQEEDEDYDF) shows a compositional bias: acidic residues. The span at 37–46 (DSGSYSSASS) shows a compositional bias: low complexity. The 79-residue stretch at 185-263 (LVGIIHQTKW…PMQVKLTFEN (79 aa)) folds into the PDZ domain. Phosphoserine occurs at positions 670 and 674. The segment at 704 to 754 (TRKPSPSCSSGGSDNGCEGGEDDGFSPHTTPDAVRKQRESQGSDGLEESGT) is disordered.

It belongs to the inturned family. As to quaternary structure, component of the CPLANE (ciliogenesis and planar polarity effectors) complex, composed of INTU, FUZ and WDPCP. Interacts with CPLANE1. Interacts with NPHP4 and DAAM1; INTU is mediating the interaction between NPHP4 and DAAM1.

It localises to the cytoplasm. It is found in the cell surface. The protein resides in the cytoskeleton. Its subcellular location is the cilium basal body. The protein localises to the microtubule organizing center. It localises to the centrosome. It is found in the centriole. Plays a key role in ciliogenesis and embryonic development. Regulator of cilia formation by controlling the organization of the apical actin cytoskeleton and the positioning of the basal bodies at the apical cell surface, which in turn is essential for the normal orientation of elongating ciliary microtubules. Plays a key role in definition of cell polarity via its role in ciliogenesis but not via conversion extension. Has an indirect effect on hedgehog signaling. Proposed to function as core component of the CPLANE (ciliogenesis and planar polarity effectors) complex involved in the recruitment of peripheral IFT-A proteins to basal bodies. Required for recruitment of CPLANE2 to the mother centriole. Binds phosphatidylinositol 3-phosphate with highest affinity, followed by phosphatidylinositol 4-phosphate and phosphatidylinositol 5-phosphate. The sequence is that of Protein inturned (INTU) from Homo sapiens (Human).